We begin with the raw amino-acid sequence, 862 residues long: Putative cargo-transport protein ypp1 (862 aa).

3 TPR repeats span residues 342–377 (QQIF…KSHE), 460–493 (SFMY…QPTN), and 494–527 (TNAL…NPKY). Ser-632, Ser-633, and Ser-637 each carry phosphoserine. TPR repeat units follow at residues 665-698 (ILGF…RRGK), 705-738 (QKLW…DHEC), 740-772 (WVYY…DPED), and 814-847 (PEAW…ADTN).

This sequence belongs to the YPP1 family.

The protein resides in the cytoplasm. In terms of biological role, involved in endocytosis. This is Putative cargo-transport protein ypp1 (ypp1) from Schizosaccharomyces pombe (strain 972 / ATCC 24843) (Fission yeast).